Consider the following 119-residue polypeptide: MNRPVFPVYHFLVSAAILVFVVIFWRTHHRDHRNWLALRLFVLCSVNRWPLRMVKGTVVGTTDTLREMQRYEQLSSTGLTTGKSSREHRYMIRLLLSLVRVCAGIICQCMTIPYQPHRG.

2 helical membrane passes run 5–25 (VFPV…VIFW) and 94–114 (LLLS…TIPY).

This sequence belongs to the phosphoethanolamine transferase family.

The protein localises to the cell inner membrane. The sequence is that of Putative phosphoethanolamine transferase YjgX (yjgX) from Escherichia coli (strain K12).